Consider the following 131-residue polypeptide: Agouti-signaling protein (131 aa).

Positions 1-20 are cleaved as a signal peptide; sequence MNIFRLLLATLLVSLCFLTA. The N-linked (GlcNAc...) asparagine glycan is linked to N38. Positions 57–104 are disordered; that stretch reads KSKKISRKEAEKKRSSKKKASMKNVARPRPPPPNPCVATRNSCKSPAP. Disulfide bonds link C92–C107, C99–C113, C106–C124, C110–C131, and C115–C122. The Agouti domain occupies 92–131; that stretch reads CVATRNSCKSPAPACCDPCASCQCRFFRSACTCRVLSPSC.

Its subcellular location is the secreted. In terms of biological role, involved in the regulation of melanogenesis. The binding of ASP to MC1R precludes alpha-MSH initiated signaling and thus blocks production of cAMP, leading to a down-regulation of eumelanogenesis (brown/black pigment) and thus increasing synthesis of pheomelanin (yellow/red pigment). This is Agouti-signaling protein (ASIP) from Vulpes vulpes (Red fox).